Reading from the N-terminus, the 173-residue chain is Crossover junction endodeoxyribonuclease RuvC (173 aa).

Active-site residues include D8, E67, and D139. Residues D8, E67, and D139 each coordinate Mg(2+).

This sequence belongs to the RuvC family. Homodimer which binds Holliday junction (HJ) DNA. The HJ becomes 2-fold symmetrical on binding to RuvC with unstacked arms; it has a different conformation from HJ DNA in complex with RuvA. In the full resolvosome a probable DNA-RuvA(4)-RuvB(12)-RuvC(2) complex forms which resolves the HJ. The cofactor is Mg(2+).

The protein resides in the cytoplasm. It catalyses the reaction Endonucleolytic cleavage at a junction such as a reciprocal single-stranded crossover between two homologous DNA duplexes (Holliday junction).. In terms of biological role, the RuvA-RuvB-RuvC complex processes Holliday junction (HJ) DNA during genetic recombination and DNA repair. Endonuclease that resolves HJ intermediates. Cleaves cruciform DNA by making single-stranded nicks across the HJ at symmetrical positions within the homologous arms, yielding a 5'-phosphate and a 3'-hydroxyl group; requires a central core of homology in the junction. The consensus cleavage sequence is 5'-(A/T)TT(C/G)-3'. Cleavage occurs on the 3'-side of the TT dinucleotide at the point of strand exchange. HJ branch migration catalyzed by RuvA-RuvB allows RuvC to scan DNA until it finds its consensus sequence, where it cleaves and resolves the cruciform DNA. In Yersinia pseudotuberculosis serotype O:1b (strain IP 31758), this protein is Crossover junction endodeoxyribonuclease RuvC.